The primary structure comprises 101 residues: uncharacterized protein (101 aa).

A run of 2 helical transmembrane segments spans residues 52 to 72 (VVFIIVFLTGWAAKSIIVKLL) and 75 to 95 (LWRLSTLIPSFFASFFMSLLG).

Its subcellular location is the endoplasmic reticulum membrane. This is an uncharacterized protein from Schizosaccharomyces pombe (strain 972 / ATCC 24843) (Fission yeast).